The primary structure comprises 487 residues: Histamine H1 receptor (487 aa).

Residues 1-29 (MSLPNSSCLLEDKMCEGNKTTMASPQLMP) lie on the Extracellular side of the membrane. 2 N-linked (GlcNAc...) asparagine glycosylation sites follow: N5 and N18. Residues 30–50 (LVVVLSTICLVTVGLNLLVLY) form a helical membrane-spanning segment. Topologically, residues 51-64 (AVRSERKLHTVGNL) are cytoplasmic. The helical transmembrane segment at 65 to 89 (YIVSLSVADLIVGAVVMPMNILYLL) threads the bilayer. Residues 90 to 97 (MSKWSLGR) lie on the Extracellular side of the membrane. Residues 98-123 (PLCLFWLSMDYVASTASIFSVFILCI) form a helical membrane-spanning segment. A disulfide bond links C100 and C180. D107 and T112 together coordinate histamine. Residues 107–112 (DYVAST) form an important for agonist binding region. The Cytoplasmic portion of the chain corresponds to 124–144 (DRYRSVQQPLRYLKYRTKTRA). T140 and T142 each carry phosphothreonine. A helical transmembrane segment spans residues 145–164 (SATILGAWFLSFLWVIPILG). At 165 to 188 (WNHFMQQTSVRREDKCETDFYDVT) the chain is on the extracellular side. A helical transmembrane segment spans residues 189 to 211 (WFKVMTAIINFYLPTLLMLWFYA). A histamine-binding site is contributed by N198. Residues 212–416 (KIYKAVRQHC…MNRERKAAKQ (205 aa)) lie on the Cytoplasmic side of the membrane. S230 is modified (phosphoserine). Residues 238–261 (KLRPENPKGDAKKPGKESPWEVLK) are compositionally biased toward basic and acidic residues. A disordered region spans residues 238–291 (KLRPENPKGDAKKPGKESPWEVLKRKPKDAGGGSVLKSPSQTPKEMKSPVVFSQ). T279 is subject to Phosphothreonine. A phosphoserine mark is found at S344 and S347. The interval 345-379 (EISEDQMLGDSQSFSRTDSDTTTETAPGKGKLRSG) is disordered. Over residues 353–369 (GDSQSFSRTDSDTTTET) the composition is skewed to polar residues. 3 positions are modified to phosphoserine: S380, S396, and S398. Residues 417 to 440 (LGFIMAAFILCWIPYFIFFMVIAF) form a helical membrane-spanning segment. Residues 424–428 (FILCW) form an important for agonist binding region. Residue Y431 participates in histamine binding. C441 and C444 form a disulfide bridge. The Extracellular portion of the chain corresponds to 441-446 (CKNCCN). The helical transmembrane segment at 447-469 (EHLHMFTIWLGYINSTLNPLIYP) threads the bilayer. Topologically, residues 470 to 487 (LCNENFKKTFKRILHIRS) are cytoplasmic.

It belongs to the G-protein coupled receptor 1 family. Phosphorylation at sites in the second and third cytoplasmic loops independently contribute to agonist-induced receptor down-regulation.

It localises to the cell membrane. Its function is as follows. G-protein-coupled receptor for histamine, a biogenic amine that functions as an immune modulator and a neurotransmitter. Through the H1 receptor, histamine mediates the contraction of smooth muscles and increases capillary permeability due to contraction of terminal venules. Also mediates neurotransmission in the central nervous system and thereby regulates circadian rhythms, emotional and locomotor activities as well as cognitive functions. The sequence is that of Histamine H1 receptor from Homo sapiens (Human).